A 303-amino-acid chain; its full sequence is Coenzyme PQQ synthesis protein B (303 aa).

This sequence belongs to the PqqB family.

Its pathway is cofactor biosynthesis; pyrroloquinoline quinone biosynthesis. In terms of biological role, may be involved in the transport of PQQ or its precursor to the periplasm. The polypeptide is Coenzyme PQQ synthesis protein B (Pseudomonas putida (strain GB-1)).